Reading from the N-terminus, the 98-residue chain is Small ribosomal subunit protein bS6 (98 aa).

This sequence belongs to the bacterial ribosomal protein bS6 family.

Binds together with bS18 to 16S ribosomal RNA. The polypeptide is Small ribosomal subunit protein bS6 (Moorella thermoacetica (strain ATCC 39073 / JCM 9320)).